The primary structure comprises 95 residues: uncharacterized protein (95 aa).

This is an uncharacterized protein from Acidianus hospitalis (AFV-1).